A 228-amino-acid chain; its full sequence is Ribonuclease HII (228 aa).

Positions 1–210 (MKIAGIDEAG…LKKIAEKVES (210 aa)) constitute an RNase H type-2 domain. A divalent metal cation-binding residues include D7, E8, and D105.

Belongs to the RNase HII family. In terms of assembly, monomer. Mn(2+) serves as cofactor. It depends on Mg(2+) as a cofactor.

Its subcellular location is the cytoplasm. The enzyme catalyses Endonucleolytic cleavage to 5'-phosphomonoester.. Functionally, endonuclease that specifically degrades the RNA of RNA-DNA hybrids. This Thermococcus kodakarensis (strain ATCC BAA-918 / JCM 12380 / KOD1) (Pyrococcus kodakaraensis (strain KOD1)) protein is Ribonuclease HII (rnhB).